We begin with the raw amino-acid sequence, 769 residues long: Non-secreted LysM effector LysM17 (769 aa).

The helical transmembrane segment at 173–193 threads the bilayer; sequence LPPLATAIPLAVVWASLASVI. N-linked (GlcNAc...) asparagine glycans are attached at residues N305, N368, N423, and N452. 2 LysM domains span residues 498-543 and 562-610; these read RTIQ…HVCC and YSNL…KICL. Residues N631, N671, N706, and N734 are each glycosylated (N-linked (GlcNAc...) asparagine).

The protein belongs to the secreted LysM effector family.

It localises to the membrane. In terms of biological role, non-secreted LysM effector that might be involved in manipulation of host defenses for successful infection. This chain is Non-secreted LysM effector LysM17, found in Penicillium expansum (Blue mold rot fungus).